The primary structure comprises 147 residues: Deoxyuridine 5'-triphosphate nucleotidohydrolase (147 aa).

Residue R24 coordinates Mg(2+). Residues 68–70 (PRS), 82–85 (GVID), Y88, G93, I95, and R111 contribute to the dUTP site.

Belongs to the dUTPase family. Mg(2+) serves as cofactor.

The enzyme catalyses dUTP + H2O = dUMP + diphosphate + H(+). Functionally, this enzyme is involved in nucleotide metabolism: it produces dUMP, the immediate precursor of thymidine nucleotides and it decreases the intracellular concentration of dUTP so that uracil cannot be incorporated into DNA. The polypeptide is Deoxyuridine 5'-triphosphate nucleotidohydrolase (OPG046) (Camelus).